The following is a 433-amino-acid chain: Serendipity locus protein delta (433 aa).

One can recognise a ZAD domain in the interval 1 to 90 (MDTCFFCGAV…TQKRLTTQLK (90 aa)). Positions 4, 7, 61, and 64 each coordinate Zn(2+). The interval 141–162 (DTEIKREFVDEEEEEDDDDDDE) is disordered. Residues 149–162 (VDEEEEEDDDDDDE) show a composition bias toward acidic residues. The Nuclear localization signal motif lies at 187 to 193 (PTKKRVK). 7 consecutive C2H2-type zinc fingers follow at residues 194–217 (QECT…SEEH), 223–245 (HICP…MNLH), 251–273 (KQCR…MRMH), 279–301 (YQCE…RLRH), 308–330 (IICS…TLIH), 337–359 (HYCS…MKTH), and 405–428 (GFCL…QFDH).

As to quaternary structure, homodimer (via ZAD domain) in solution. Binds DNA as a homodimer. N-terminal regions of the protein are required, in addition to the zinc fingers, for the specificity of chromatin-binding. In terms of tissue distribution, predominantly localized to the sub- and supraesophagal ganglia and the ventral nerve cord in the embryo, after dorsal closure.

Its subcellular location is the nucleus. Its function is as follows. Transcriptional activator that controls bicoid gene expression during oogenesis. Found in transcriptionally active cells. Binds to specific sites on polytene chromosomes of third instar larvae. Binds to the consensus DNA sequence 5'-YTAGAGATGGRAA-3'. The protein is Serendipity locus protein delta (Sry-delta) of Drosophila melanogaster (Fruit fly).